The following is a 231-amino-acid chain: Orotate phosphoribosyltransferase (231 aa).

Residues Lys27, 79 to 80 (YK), Arg106, Lys107, Lys110, His112, and 133 to 141 (DDVMTAGTA) contribute to the 5-phospho-alpha-D-ribose 1-diphosphate site. Residues Thr137 and Arg166 each contribute to the orotate site.

It belongs to the purine/pyrimidine phosphoribosyltransferase family. PyrE subfamily. As to quaternary structure, homodimer. Mg(2+) is required as a cofactor.

The catalysed reaction is orotidine 5'-phosphate + diphosphate = orotate + 5-phospho-alpha-D-ribose 1-diphosphate. Its pathway is pyrimidine metabolism; UMP biosynthesis via de novo pathway; UMP from orotate: step 1/2. Catalyzes the transfer of a ribosyl phosphate group from 5-phosphoribose 1-diphosphate to orotate, leading to the formation of orotidine monophosphate (OMP). This Bifidobacterium animalis subsp. lactis (strain AD011) protein is Orotate phosphoribosyltransferase.